A 400-amino-acid chain; its full sequence is Argininosuccinate synthase (400 aa).

ATP-binding positions include 10-18 (AYSGGVDTS) and Ala38. Tyr89 is a binding site for L-citrulline. ATP is bound at residue Gly119. L-aspartate contacts are provided by Thr121, Asn125, and Asp126. Asn125 is a binding site for L-citrulline. L-citrulline is bound by residues Arg129, Ser177, Ser186, Glu262, and Tyr274.

The protein belongs to the argininosuccinate synthase family. Type 1 subfamily. As to quaternary structure, homotetramer.

Its subcellular location is the cytoplasm. It carries out the reaction L-citrulline + L-aspartate + ATP = 2-(N(omega)-L-arginino)succinate + AMP + diphosphate + H(+). It functions in the pathway amino-acid biosynthesis; L-arginine biosynthesis; L-arginine from L-ornithine and carbamoyl phosphate: step 2/3. The protein is Argininosuccinate synthase of Prochlorococcus marinus (strain NATL1A).